The primary structure comprises 233 residues: Purine nucleoside phosphorylase DeoD-type (233 aa).

Position 4 (H4) interacts with a purine D-ribonucleoside. Phosphate-binding positions include G20, R24, R43, and 87 to 90; that span reads RIGT. Residues 179 to 181 and 203 to 204 contribute to the a purine D-ribonucleoside site; these read EME and SD. The active-site Proton donor is the D204.

It belongs to the PNP/UDP phosphorylase family. Homohexamer; trimer of homodimers.

It catalyses the reaction a purine D-ribonucleoside + phosphate = a purine nucleobase + alpha-D-ribose 1-phosphate. The enzyme catalyses a purine 2'-deoxy-D-ribonucleoside + phosphate = a purine nucleobase + 2-deoxy-alpha-D-ribose 1-phosphate. In terms of biological role, catalyzes the reversible phosphorolytic breakdown of the N-glycosidic bond in the beta-(deoxy)ribonucleoside molecules, with the formation of the corresponding free purine bases and pentose-1-phosphate. This chain is Purine nucleoside phosphorylase DeoD-type, found in Helicobacter pylori (strain G27).